The primary structure comprises 172 residues: Putative phosphoesterase BCAH820_1309 (172 aa).

His34 serves as the catalytic Proton donor. 2 short sequence motifs (HXTX) span residues 34–37 (HITL) and 115–118 (HLTI). His115 (proton acceptor) is an active-site residue.

It belongs to the 2H phosphoesterase superfamily. YjcG family.

The sequence is that of Putative phosphoesterase BCAH820_1309 from Bacillus cereus (strain AH820).